The primary structure comprises 397 residues: Aromatic-amino-acid aminotransferase (397 aa).

Substrate is bound by residues glycine 34, tyrosine 66, tryptophan 131, and asparagine 184. Lysine 247 carries the post-translational modification N6-(pyridoxal phosphate)lysine. Substrate-binding residues include arginine 281 and arginine 375.

This sequence belongs to the class-I pyridoxal-phosphate-dependent aminotransferase family. As to quaternary structure, homodimer. Pyridoxal 5'-phosphate serves as cofactor.

The protein localises to the cytoplasm. It carries out the reaction an aromatic L-alpha-amino acid + 2-oxoglutarate = an aromatic oxo-acid + L-glutamate. It catalyses the reaction (3S)-3-methyl-L-phenylalanine + 2-oxoglutarate = (3S)-2-oxo-3-phenylbutanoate + L-glutamate. It functions in the pathway amino-acid biosynthesis; L-phenylalanine biosynthesis; L-phenylalanine from phenylpyruvate (ArAT route): step 1/1. It participates in amino-acid biosynthesis; L-tyrosine biosynthesis; L-tyrosine from (4-hydroxyphenyl)pyruvate: step 1/1. Functionally, broad-specificity enzyme that catalyzes the transamination of 2-ketoisocaproate, p-hydroxyphenylpyruvate, and phenylpyruvate to yield leucine, tyrosine, and phenylalanine, respectively. In vitro, is able to catalyze the conversion of beta-methyl phenylpyruvate to the nonproteinogenic amino acid (2S,3S)-beta-methyl-phenylalanine, a building block of the antibiotic mannopeptimycin produced by Streptomyces hygroscopicus NRRL3085. The sequence is that of Aromatic-amino-acid aminotransferase (tyrB) from Escherichia coli (strain K12).